A 148-amino-acid polypeptide reads, in one-letter code: FAD synthase (148 aa).

Residues 9–10 (TF), 14–17 (HPGH), N92, and Y119 each bind ATP.

This sequence belongs to the archaeal FAD synthase family. As to quaternary structure, homodimer. A divalent metal cation is required as a cofactor.

The catalysed reaction is FMN + ATP + H(+) = FAD + diphosphate. It participates in cofactor biosynthesis; FAD biosynthesis; FAD from FMN: step 1/1. In terms of biological role, catalyzes the transfer of the AMP portion of ATP to flavin mononucleotide (FMN) to produce flavin adenine dinucleotide (FAD) coenzyme. This chain is FAD synthase, found in Methanolacinia petrolearia (strain DSM 11571 / OCM 486 / SEBR 4847) (Methanoplanus petrolearius).